Consider the following 268-residue polypeptide: Undecaprenyl-diphosphatase 1 (268 aa).

7 consecutive transmembrane segments (helical) span residues 5–25 (SIIS…IPVS), 43–63 (GNTF…LVYF), 84–104 (LAVL…HDFI), 107–127 (VLFE…FILL), 184–204 (AAEF…VLDL), 218–238 (LIAV…RSLL), and 247–267 (APFA…LLVI).

The protein belongs to the UppP family.

It is found in the cell inner membrane. It carries out the reaction di-trans,octa-cis-undecaprenyl diphosphate + H2O = di-trans,octa-cis-undecaprenyl phosphate + phosphate + H(+). Functionally, catalyzes the dephosphorylation of undecaprenyl diphosphate (UPP). Confers resistance to bacitracin. This Agrobacterium fabrum (strain C58 / ATCC 33970) (Agrobacterium tumefaciens (strain C58)) protein is Undecaprenyl-diphosphatase 1.